The following is an 831-amino-acid chain: Leucine--tRNA ligase (831 aa).

A 'HIGH' region motif is present at residues 35–45; it reads PYPSGKIHVGH. The short motif at 600 to 604 is the 'KMSKS' region element; it reads KMSKS. Residue Lys-603 coordinates ATP.

It belongs to the class-I aminoacyl-tRNA synthetase family.

It localises to the cytoplasm. The enzyme catalyses tRNA(Leu) + L-leucine + ATP = L-leucyl-tRNA(Leu) + AMP + diphosphate. The sequence is that of Leucine--tRNA ligase from Rickettsia bellii (strain RML369-C).